The chain runs to 141 residues: Hemoglobin subunit alpha-D (141 aa).

Residues 1 to 141 (MLTAEDKKLI…VSAVLAEKYR (141 aa)) form the Globin domain. Heme b contacts are provided by H58 and H87.

It belongs to the globin family. As to quaternary structure, heterotetramer of two alpha-D chains and two beta chains. As to expression, red blood cells.

Functionally, involved in oxygen transport from the lung to the various peripheral tissues. The chain is Hemoglobin subunit alpha-D (HBAD) from Meleagris gallopavo (Wild turkey).